Here is a 579-residue protein sequence, read N- to C-terminus: uncharacterized protein (579 aa).

The next 3 helical transmembrane spans lie at 173–193 (IAMGLAGLAGGALIGLTGGLA), 196–216 (FVAAGLGTLFAGLGLGTMIGA), and 218–238 (YLGTLITSAPMITALFGGFGA).

Belongs to the TMCO4 family.

The protein resides in the cytoplasm. The protein localises to the nucleus membrane. This is an uncharacterized protein from Schizosaccharomyces pombe (strain 972 / ATCC 24843) (Fission yeast).